The chain runs to 145 residues: MGKGKPRGLNSARKLRVHRRNNRWAENNYKKRLLGTAFKSSPFGGSSHAKGIVLEKLGIESKQPNSAIRKCVRVQLIKNGKKVTAFVPNDGCLNFVDENDEVLLAGFGRKGKAKGDIPGVRFKVVKVSGVSLLALWKEKKEKPRS.

Position 64 is a hydroxyproline (Pro64).

The protein belongs to the universal ribosomal protein uS12 family.

The polypeptide is Small ribosomal subunit protein uS12A (RPS23A) (Naumovozyma castellii (Yeast)).